Reading from the N-terminus, the 188-residue chain is MPVSIPNREEILADWEAHPMRRPRIQKVTINIGVGESGERLTKAEIMLQRLTGQKPIRRKAKKTNRDFGIRRGEPIAVKVTLRGPKAYEMLKRLLAAVDYKLKASSFDEHGNVCFGIEEHINIPGVEYDPEIGIFGMDVCVTLERPGFRVARRKRKRARIPTRHKLTKEEGMLYMMEEFGVEIVEEEG.

It belongs to the universal ribosomal protein uL5 family. In terms of assembly, part of the 50S ribosomal subunit; contacts the 5S rRNA and probably tRNA. Forms a bridge to the 30S subunit in the 70S ribosome.

This is one of the proteins that bind and probably mediate the attachment of the 5S RNA into the large ribosomal subunit, where it forms part of the central protuberance. In the 70S ribosome it contacts protein S13 of the 30S subunit (bridge B1b), connecting the 2 subunits; this bridge is implicated in subunit movement. May contact the P site tRNA; the 5S rRNA and some of its associated proteins might help stabilize positioning of ribosome-bound tRNAs. The polypeptide is Large ribosomal subunit protein uL5 (Pyrococcus horikoshii (strain ATCC 700860 / DSM 12428 / JCM 9974 / NBRC 100139 / OT-3)).